A 325-amino-acid polypeptide reads, in one-letter code: Malate dehydrogenase (325 aa).

Gly7–Gly13 is an NADP(+) binding site. Substrate-binding residues include Arg84 and Arg90. Residues Asn97 and Val120–Asn122 each bind NADP(+). Substrate contacts are provided by Asn122 and Arg153. The active-site Proton acceptor is the His177.

The protein belongs to the LDH/MDH superfamily.

The catalysed reaction is (S)-malate + NADP(+) = oxaloacetate + NADPH + H(+). It carries out the reaction (S)-malate + NAD(+) = oxaloacetate + NADH + H(+). In terms of biological role, catalyzes the reversible oxidation of malate to oxaloacetate. Can use NAD(+) and NADP(+) with similar specific activity. The polypeptide is Malate dehydrogenase (Methanothermobacter marburgensis (strain ATCC BAA-927 / DSM 2133 / JCM 14651 / NBRC 100331 / OCM 82 / Marburg) (Methanobacterium thermoautotrophicum)).